We begin with the raw amino-acid sequence, 376 residues long: Succinyl-diaminopimelate desuccinylase 1 (376 aa).

His-67 is a Zn(2+) binding site. The active site involves Asp-69. Asp-100 is a binding site for Zn(2+). Catalysis depends on Glu-134, which acts as the Proton acceptor. Positions 135, 163, and 349 each coordinate Zn(2+).

It belongs to the peptidase M20A family. DapE subfamily. In terms of assembly, homodimer. Zn(2+) is required as a cofactor. Co(2+) serves as cofactor.

It catalyses the reaction N-succinyl-(2S,6S)-2,6-diaminopimelate + H2O = (2S,6S)-2,6-diaminopimelate + succinate. The protein operates within amino-acid biosynthesis; L-lysine biosynthesis via DAP pathway; LL-2,6-diaminopimelate from (S)-tetrahydrodipicolinate (succinylase route): step 3/3. In terms of biological role, catalyzes the hydrolysis of N-succinyl-L,L-diaminopimelic acid (SDAP), forming succinate and LL-2,6-diaminopimelate (DAP), an intermediate involved in the bacterial biosynthesis of lysine and meso-diaminopimelic acid, an essential component of bacterial cell walls. The chain is Succinyl-diaminopimelate desuccinylase 1 from Shewanella loihica (strain ATCC BAA-1088 / PV-4).